The chain runs to 197 residues: Nucleoid occlusion factor SlmA (197 aa).

The region spanning 7–67 (INRREHILQC…GLIDFIEESL (61 aa)) is the HTH tetR-type domain. Positions 30 to 49 (TTAKLAAEVGVSEAALYRHF) form a DNA-binding region, H-T-H motif.

It belongs to the nucleoid occlusion factor SlmA family. As to quaternary structure, homodimer. Interacts with FtsZ.

The protein localises to the cytoplasm. It is found in the nucleoid. Required for nucleoid occlusion (NO) phenomenon, which prevents Z-ring formation and cell division over the nucleoid. Acts as a DNA-associated cell division inhibitor that binds simultaneously chromosomal DNA and FtsZ, and disrupts the assembly of FtsZ polymers. SlmA-DNA-binding sequences (SBS) are dispersed on non-Ter regions of the chromosome, preventing FtsZ polymerization at these regions. This is Nucleoid occlusion factor SlmA from Shewanella woodyi (strain ATCC 51908 / MS32).